An 88-amino-acid chain; its full sequence is Small ribosomal subunit protein uS15 (88 aa).

Belongs to the universal ribosomal protein uS15 family. As to quaternary structure, part of the 30S ribosomal subunit. Forms a bridge to the 50S subunit in the 70S ribosome, contacting the 23S rRNA.

Its function is as follows. One of the primary rRNA binding proteins, it binds directly to 16S rRNA where it helps nucleate assembly of the platform of the 30S subunit by binding and bridging several RNA helices of the 16S rRNA. Forms an intersubunit bridge (bridge B4) with the 23S rRNA of the 50S subunit in the ribosome. This chain is Small ribosomal subunit protein uS15, found in Francisella tularensis subsp. novicida (strain U112).